The primary structure comprises 75 residues: Conotoxin Vt15.1 (75 aa).

The N-terminal stretch at 1-19 is a signal peptide; it reads MMPVILPLLLSLAIRGGDG. Positions 20–43 are excised as a propeptide; that stretch reads QAIQGDRDLIAKLFKRYQEHGLSV. Trp73 carries the post-translational modification Tryptophan amide.

It belongs to the conotoxin V superfamily. Post-translationally, contains 4 disulfide bonds. Expressed by the venom duct.

The protein localises to the secreted. The sequence is that of Conotoxin Vt15.1 from Conus planorbis (Planorbis cone).